The sequence spans 415 residues: Adipocyte plasma membrane-associated protein (415 aa).

Residues 1–29 (MSEADGLRQRRPLRPQVVTDDGQVPEVKE) form a disordered region. Residue Ser2 is modified to N-acetylserine. Over 2 to 39 (SEADGLRQRRPLRPQVVTDDGQVPEVKEGSSFSGRVFR) the chain is Cytoplasmic. Thr19 carries the phosphothreonine modification. Residues 40–60 (MTFLMLAVSLAIPLLGAMMLL) form a helical; Signal-anchor for type II membrane protein membrane-spanning segment. The Extracellular portion of the chain corresponds to 61-415 (ESPIDPQSFS…FICRLSLQSI (355 aa)). Asn159 carries an N-linked (GlcNAc...) asparagine glycan.

This sequence belongs to the strictosidine synthase family. In terms of processing, glycosylated in vitro. In terms of tissue distribution, strongly expressed in adipose tissue. Highly expressed in liver, heart, and kidney. Expressed at intermediate level in brain and lung. Weakly expressed in spleen, skeletal muscle and testis.

The protein localises to the membrane. Its function is as follows. Exhibits strong arylesterase activity with beta-naphthyl acetate and phenyl acetate. May play a role in adipocyte differentiation. The protein is Adipocyte plasma membrane-associated protein (Apmap) of Mus musculus (Mouse).